A 1308-amino-acid chain; its full sequence is Receptor tyrosine-protein kinase erbB-4 (1308 aa).

An N-terminal signal peptide occupies residues 1-25 (MKLATGLWVWGSLLMAAGTVQPSAS). Topologically, residues 26–652 (QSVCAGTENK…TLPQHARTPL (627 aa)) are extracellular. A disulfide bridge connects residues C29 and C56. N138, N174, and N181 each carry an N-linked (GlcNAc...) asparagine glycan. 12 cysteine pairs are disulfide-bonded: C156/C186, C189/C197, C193/C205, C213/C221, C217/C229, C230/C238, C234/C246, C249/C258, C262/C289, C293/C304, C308/C323, and C326/C330. N253 carries N-linked (GlcNAc...) asparagine glycosylation. N-linked (GlcNAc...) asparagine glycosylation is found at N410, N473, and N495. 10 disulfides stabilise this stretch: C503-C512, C507-C520, C523-C532, C536-C552, C555-C569, C559-C577, C580-C589, C593-C614, C617-C625, and C621-C633. An N-linked (GlcNAc...) asparagine glycan is attached at N548. An N-linked (GlcNAc...) asparagine glycan is attached at N576. An N-linked (GlcNAc...) asparagine glycan is attached at N620. A membrane pass occupies residues 653-673 (IAAGVIGGLFILVIMALTFAV). The Cytoplasmic portion of the chain corresponds to 674 to 1308 (YVRRKSIKKK…PPYRHRNTVV (635 aa)). The Nuclear localization signal signature appears at 676–684 (RRKSIKKKR). Residues 718 to 985 (LKRVKVLGSG…RMARDPQRYL (268 aa)) enclose the Protein kinase domain. Residues 724 to 732 (LGSGAFGTV), K751, 797 to 799 (QLM), and 843 to 848 (DLAARN) contribute to the ATP site. D843 (proton acceptor) is an active-site residue. Residues Y875, Y1035, and Y1056 each carry the phosphotyrosine; by autocatalysis modification. A PPxy motif 1 motif is present at residues 1032-1035 (PPIY). The interval 1117 to 1149 (PHVQEDSSTQRYSADPTVFAPERNPRGELDEEG) is disordered. 7 positions are modified to phosphotyrosine; by autocatalysis: Y1150, Y1162, Y1188, Y1202, Y1242, Y1258, and Y1284. A PPxY motif 2 motif is present at residues 1282–1285 (PEYL). The short motif at 1290–1292 (LKP) is the PDZ-binding element.

This sequence belongs to the protein kinase superfamily. Tyr protein kinase family. EGF receptor subfamily. As to quaternary structure, monomer in the absence of bound ligand. Homodimer or heterodimer with another ERBB family member upon ligand binding, thus forming heterotetramers. Interacts with EGFR and ERBB2. Interacts with DLG2 (via its PDZ domain), DLG3 (via its PDZ domain), DLG4 (via its PDZ domain) and SNTB2 (via its PDZ domain). Interacts with MUC1. Interacts (via its PPxy motifs) with WWOX. Interacts (via the PPxY motif 3 of isoform JM-A CYT-2) with YAP1 (via the WW domain 1 of isoform 1). Interacts (isoform JM-A CYT-1 and isoform JM-B CYT-1) with WWP1. Interacts (via its intracellular domain) with TRIM28. Interacts (via the intracellular domains of both CYT-1 and CYT-2 isoforms) with KAP1; the interaction does not phosphorylate KAP1 but represses ERBB4-mediated transcriptional activity. Interacts with PRPU, DDX23, MATR3, RBM15, ILF3, KAP1, U5S1, U2SURP, ITCH, HNRNPU, AP2A1, NULC, LEO1, WWP2, IGHG1, HXK1, GRB7 and SRRT. Interacts (phosphorylated isoform JM-A CYT-1 and isoform JM-B CYT-1) with PIK3R1. Interacts with SHC1. Interacts with GRB2. Interacts (soluble intracellular domain) with BCL2. Interacts (phosphorylated) with STAT1. Interacts with CBFA2T3. Interacts (soluble intracellular domain) with STAT5A. Isoform JM-A CYT-1 and isoform JM-A CYT-2 are processed by ADAM17. Proteolytic processing in response to ligand or 12-O-tetradecanoylphorbol-13-acetate stimulation results in the production of 120 kDa soluble receptor forms and intermediate membrane-anchored 80 kDa fragments (m80HER4), which are further processed by a presenilin-dependent gamma-secretase to release a cytoplasmic intracellular domain (E4ICD; E4ICD1/s80Cyt1 or E4ICD2/s80Cyt2, depending on the isoform). Membrane-anchored 80 kDa fragments of the processed isoform JM-A CYT-1 are more readily degraded by the proteasome than fragments of isoform JM-A CYT-2, suggesting a prevalence of E4ICD2 over E4ICD1. Isoform JM-B CYT-1 and isoform JM-B CYT-2 lack the ADAM17 cleavage site and are not processed by ADAM17, precluding further processing by gamma-secretase. Post-translationally, autophosphorylated on tyrosine residues in response to ligand binding. Autophosphorylation occurs in trans, i.e. one subunit of the dimeric receptor phosphorylates tyrosine residues on the other subunit. Ligands trigger phosphorylation at specific tyrosine residues, thereby creating binding sites for scaffold proteins and effectors. Constitutively phosphorylated at a basal level when overexpressed in heterologous systems; ligand binding leads to increased phosphorylation. Phosphorylation at Tyr-1035 is important for interaction with STAT1. Phosphorylation at Tyr-1056 is important for interaction with PIK3R1. Phosphorylation at Tyr-1242 is important for interaction with SHC1. Phosphorylation at Tyr-1188 may also contribute to the interaction with SHC1. Isoform JM-A CYT-2 is constitutively phosphorylated on tyrosine residues in a ligand-independent manner. E4ICD2 but not E4ICD1 is phosphorylated on tyrosine residues. In terms of processing, ubiquitinated. During mitosis, the ERBB4 intracellular domain is ubiquitinated by the APC/C complex and targeted to proteasomal degradation. Isoform JM-A CYT-1 and isoform JM-B CYT-1 are ubiquitinated by WWP1. The ERBB4 intracellular domain (E4ICD1) is ubiquitinated, and this involves NEDD4. As to expression, isoform JM-A CYT-2 and isoform JM-B CYT-2 are expressed in cerebellum, cerebral cortex, spinal cord, medulla oblongata and eye, but the kidney expresses solely isoform JM-A CYT-2 and the heart solely isoform JM-B CYT-2.

Its subcellular location is the cell membrane. It is found in the nucleus. It localises to the mitochondrion. It carries out the reaction L-tyrosyl-[protein] + ATP = O-phospho-L-tyrosyl-[protein] + ADP + H(+). Binding of a cognate ligand leads to dimerization and activation by autophosphorylation on tyrosine residues. In vitro kinase activity is increased by Mg(2+). In terms of biological role, tyrosine-protein kinase that plays an essential role as cell surface receptor for neuregulins and EGF family members and regulates development of the heart, the central nervous system and the mammary gland, gene transcription, cell proliferation, differentiation, migration and apoptosis. Required for normal cardiac muscle differentiation during embryonic development, and for postnatal cardiomyocyte proliferation. Required for normal development of the embryonic central nervous system, especially for normal neural crest cell migration and normal axon guidance. Required for mammary gland differentiation, induction of milk proteins and lactation. Acts as cell-surface receptor for the neuregulins NRG1, NRG2, NRG3 and NRG4 and the EGF family members BTC, EREG and HBEGF. Ligand binding triggers receptor dimerization and autophosphorylation at specific tyrosine residues that then serve as binding sites for scaffold proteins and effectors. Ligand specificity and signaling is modulated by alternative splicing, proteolytic processing, and by the formation of heterodimers with other ERBB family members, thereby creating multiple combinations of intracellular phosphotyrosines that trigger ligand- and context-specific cellular responses. Mediates phosphorylation of SHC1 and activation of the MAP kinases MAPK1/ERK2 and MAPK3/ERK1. Isoform JM-A CYT-1 and isoform JM-B CYT-1 phosphorylate PIK3R1, leading to the activation of phosphatidylinositol 3-kinase and AKT1 and protect cells against apoptosis. Isoform JM-A CYT-1 and isoform JM-B CYT-1 mediate reorganization of the actin cytoskeleton and promote cell migration in response to NRG1. Isoform JM-A CYT-2 and isoform JM-B CYT-2 lack the phosphotyrosine that mediates interaction with PIK3R1, and hence do not phosphorylate PIK3R1, do not protect cells against apoptosis, and do not promote reorganization of the actin cytoskeleton and cell migration. Proteolytic processing of isoform JM-A CYT-1 and isoform JM-A CYT-2 gives rise to the corresponding soluble intracellular domains (4ICD) that translocate to the nucleus, promote nuclear import of STAT5A, activation of STAT5A, mammary epithelium differentiation, cell proliferation and activation of gene expression. The ERBB4 soluble intracellular domains (4ICD) colocalize with STAT5A at the CSN2 promoter to regulate transcription of milk proteins during lactation. The ERBB4 soluble intracellular domains can also translocate to mitochondria and promote apoptosis. The sequence is that of Receptor tyrosine-protein kinase erbB-4 (Erbb4) from Mus musculus (Mouse).